Consider the following 362-residue polypeptide: uncharacterized protein (362 aa).

3 disordered regions span residues 1-117 (MASK…GLNR), 153-172 (SSAP…GIRK), and 210-266 (RHFD…SSSN). Basic and acidic residues predominate over residues 12–23 (AKKEKEIKKEIE). Residues 51–70 (ENDDTDGDGKEEDAQKEDDI) show a composition bias toward acidic residues. 3 stretches are compositionally biased toward low complexity: residues 100-112 (NSPP…TRNT), 153-167 (SSAP…GSPS), and 241-265 (VPPS…TSSS).

This is an uncharacterized protein from Caenorhabditis elegans.